The following is a 450-amino-acid chain: Probable ECA polymerase (450 aa).

The next 11 helical transmembrane spans lie at 6 to 26 (FSGLLVVWLLSTLFIATLTWF), 37 to 57 (VFFSLLFLLTFFFGFPLTSVL), 63 to 83 (VGVAPPEILLQALLSAACFYA), 120 to 140 (LMGIALVSVGIFFMHNGFLLF), 155 to 175 (GVALKRFFYFFIPAMLVIYFL), 181 to 201 (AWLFFLVSTVAFGLLTYMIVG), 207 to 227 (IIIAFAIFLFIGIIRGWISLW), 228 to 248 (MLVAAGVLGIVGMFWLALKRY), 341 to 361 (LVVMGGALFIPLGAVAVGLII), 378 to 398 (YKAAILHSFCFGAIFNMIVLA), and 410 to 430 (VFFLVIFGACLLVAKLLFWLF).

This sequence belongs to the WzyE family. In terms of assembly, probably part of a complex composed of WzxE, WzyE and WzzE.

The protein resides in the cell inner membrane. It functions in the pathway bacterial outer membrane biogenesis; enterobacterial common antigen biosynthesis. Probably involved in the polymerization of enterobacterial common antigen (ECA) trisaccharide repeat units. The polypeptide is Probable ECA polymerase (Citrobacter koseri (strain ATCC BAA-895 / CDC 4225-83 / SGSC4696)).